The following is a 152-amino-acid chain: Maintenance of carboxysome distribution protein B (152 aa).

As to quaternary structure, self-associates, interacts with McdA probably via the C-terminus of both proteins. Homohexamerizes. Probably a trimer of dimers. Interacts with most of the shell components of the carboxysome (CcmK2, CcmK3, CcmK4, CcmL and CcmO, but not CcmP) via its C-terminus.

It localises to the carboxysome. Functionally, mcdA and McdB together mediate carboxysome (Cb) spacing, size, ultrastructure and probably inheritance in the cell. Together they prevent Cb aggregation. McdA is an ATPase that forms dynamic gradients on the nucleoid in response to adapter protein McdB, which associates with carboxysomes. The interplay between McdA gradients on the nucleoid and McdB-bound carboxysomes result in the equal spacing of Cbs along the cell length. McdB may have an additional function in cell divison. Stimulates the ATPase activity of McdA, causing McdA to be released from DNA. Overexpression leads to loss of McdA oscillation and formation of large Cb aggregates which colocalize with McdB, as well as diffuse McdB staining in the cytoplasm. Undergoes liquid-liquid phase separation between pH 6.5-7.5 and at concentrations between 1 uM and 167 uM. Forms polar foci upon overexpression in E.coli. Incorrect positioning (aggregation) of carboxysomes results in reduced CO(2) fixation by encapsulated RuBisCO, which leads to slower growth, cell elongation, asymmetric cell division and an increase in RuBisCO levels. The sequence is that of Maintenance of carboxysome distribution protein B from Synechococcus elongatus (strain ATCC 33912 / PCC 7942 / FACHB-805) (Anacystis nidulans R2).